The sequence spans 93 residues: uncharacterized protein (93 aa).

This is an uncharacterized protein from Sulfolobus islandicus filamentous virus (isolate Iceland/Hveragerdi) (SIFV).